We begin with the raw amino-acid sequence, 96 residues long: UPF0235 protein Pfl01_5322 (96 aa).

This sequence belongs to the UPF0235 family.

The polypeptide is UPF0235 protein Pfl01_5322 (Pseudomonas fluorescens (strain Pf0-1)).